A 530-amino-acid chain; its full sequence is MHWADVIAEKLIEERKADKYIVASGITPSGHIHVGNARETLTADAIYKGLINKGVEAELIFIADTYDPLRKLYPFLPKEFEQYIGMPLSEIPCPEGCCESYAEHFLRPYLESLDDLGVELTTYRADENYKKGLYDEKIKIALDNREKIMEILNKFRANPLPDDWWPINIVCENCGKLKTKVIKYDSEKEEITYRCEICGFENTVKPYKGRAKLPWRVDWPARWSIFNVTIEPMGKDHAAAGGSYDTGVLIAKEIYNYIPPKKVVYEWIQLKVGDKAIPMSSSKGVVFAVKDWTNIAHPEILRFLLLRSKPTKHIDFDLKKIPDLVDEYDRLEDFYFNNKDKDELSEEEQEKIRIYELSTPKIPETKPFVIPYRFCSIIAQLTYDEEKEDINMERVFEILRRNNYSIDDIDEFSMKKLKDRLLMARNWALKYGEKLVIISEDEAKEIYEKLKDKQKEWIKYFAEKLKTAEFDALNLHELIYQTAKELGLNPRDAFQASYMILLGKKYGPKLGAFLATLGKDFVIRRYSLFE.

Residues 28 to 36 (PSGHIHVGN) carry the 'HIGH' region motif. Residues 278–282 (PMSSS) carry the 'KMSKS' region motif.

It belongs to the class-I aminoacyl-tRNA synthetase family.

It is found in the cytoplasm. It carries out the reaction tRNA(Lys) + L-lysine + ATP = L-lysyl-tRNA(Lys) + AMP + diphosphate. In Methanocaldococcus jannaschii (strain ATCC 43067 / DSM 2661 / JAL-1 / JCM 10045 / NBRC 100440) (Methanococcus jannaschii), this protein is Lysine--tRNA ligase (lysS).